Reading from the N-terminus, the 212-residue chain is 3-isopropylmalate dehydratase small subunit (212 aa).

The protein belongs to the LeuD family. LeuD type 1 subfamily. Heterodimer of LeuC and LeuD.

The enzyme catalyses (2R,3S)-3-isopropylmalate = (2S)-2-isopropylmalate. It participates in amino-acid biosynthesis; L-leucine biosynthesis; L-leucine from 3-methyl-2-oxobutanoate: step 2/4. Its function is as follows. Catalyzes the isomerization between 2-isopropylmalate and 3-isopropylmalate, via the formation of 2-isopropylmaleate. The polypeptide is 3-isopropylmalate dehydratase small subunit (Nitrosomonas eutropha (strain DSM 101675 / C91 / Nm57)).